A 164-amino-acid chain; its full sequence is IQSTSMDQGBLSEDSMNSFIRTLIQAGIWKNKVPKQTARTKDGTQTAVKKTKAEPDVVANKDRLGFQPIVSVDAELLRQQRRFSSPRVLLSENTPLEPPPLYLTEEPMGLNRTSRRKRFAEGKSHRGEYSVCDSESRWVTDKSSAVDIRGHQVTVLGEIRMGPS.

A signal peptide spans 1–3 (IQS). The propeptide occupies 4-118 (TSMDQGBLSE…GLNRTSRRKR (115 aa)). Residues 89 to 126 (LLSENTPLEPPPLYLTEEPMGLNRTSRRKRFAEGKSHR) form a disordered region. N-linked (GlcNAc...) asparagine glycosylation is present at Asn111.

It belongs to the NGF-beta family.

It is found in the secreted. Functionally, seems to promote the survival of visceral and proprioceptive sensory neurons. The protein is Neurotrophin-3 (NTF3) of Cylindrophis ruffus (Red-tailed pipe snake).